A 209-amino-acid polypeptide reads, in one-letter code: DNA transformation protein TfoX1 (209 aa).

The protein belongs to the Sxy/TfoX family.

In terms of biological role, required for DNA transformation jointly with TfoY (tfoX2). This chain is DNA transformation protein TfoX1, found in Aliivibrio fischeri (strain ATCC 700601 / ES114) (Vibrio fischeri).